A 484-amino-acid polypeptide reads, in one-letter code: Glycogen synthase 2 (484 aa).

Lys15 contacts ADP-alpha-D-glucose.

The protein belongs to the glycosyltransferase 1 family. Bacterial/plant glycogen synthase subfamily.

It catalyses the reaction [(1-&gt;4)-alpha-D-glucosyl](n) + ADP-alpha-D-glucose = [(1-&gt;4)-alpha-D-glucosyl](n+1) + ADP + H(+). It functions in the pathway glycan biosynthesis; glycogen biosynthesis. In terms of biological role, synthesizes alpha-1,4-glucan chains using ADP-glucose. In Geobacter metallireducens (strain ATCC 53774 / DSM 7210 / GS-15), this protein is Glycogen synthase 2.